Consider the following 277-residue polypeptide: 3-methyl-2-oxobutanoate hydroxymethyltransferase (277 aa).

Residues aspartate 43 and aspartate 82 each coordinate Mg(2+). 3-methyl-2-oxobutanoate-binding positions include 43–44 (DS), aspartate 82, and lysine 112. Glutamate 114 serves as a coordination point for Mg(2+). Glutamate 181 acts as the Proton acceptor in catalysis.

Belongs to the PanB family. Homodecamer; pentamer of dimers. It depends on Mg(2+) as a cofactor.

Its subcellular location is the cytoplasm. It carries out the reaction 3-methyl-2-oxobutanoate + (6R)-5,10-methylene-5,6,7,8-tetrahydrofolate + H2O = 2-dehydropantoate + (6S)-5,6,7,8-tetrahydrofolate. Its pathway is cofactor biosynthesis; (R)-pantothenate biosynthesis; (R)-pantoate from 3-methyl-2-oxobutanoate: step 1/2. Functionally, catalyzes the reversible reaction in which hydroxymethyl group from 5,10-methylenetetrahydrofolate is transferred onto alpha-ketoisovalerate to form ketopantoate. The polypeptide is 3-methyl-2-oxobutanoate hydroxymethyltransferase (Bacillus licheniformis (strain ATCC 14580 / DSM 13 / JCM 2505 / CCUG 7422 / NBRC 12200 / NCIMB 9375 / NCTC 10341 / NRRL NRS-1264 / Gibson 46)).